The sequence spans 141 residues: ATP synthase epsilon chain (141 aa).

It belongs to the ATPase epsilon chain family. As to quaternary structure, F-type ATPases have 2 components, CF(1) - the catalytic core - and CF(0) - the membrane proton channel. CF(1) has five subunits: alpha(3), beta(3), gamma(1), delta(1), epsilon(1). CF(0) has three main subunits: a, b and c.

The protein resides in the cell inner membrane. Its function is as follows. Produces ATP from ADP in the presence of a proton gradient across the membrane. The sequence is that of ATP synthase epsilon chain from Dechloromonas aromatica (strain RCB).